Consider the following 342-residue polypeptide: Aromatic amino acid aminotransferase (342 aa).

At K214 the chain carries N6-(pyridoxal phosphate)lysine.

Belongs to the class-II pyridoxal-phosphate-dependent aminotransferase family. In terms of assembly, homodimer. It depends on pyridoxal 5'-phosphate as a cofactor.

It catalyses the reaction an aromatic L-alpha-amino acid + 2-oxoglutarate = an aromatic oxo-acid + L-glutamate. Functionally, aminotransferase that catalyzes the conversion of aromatic amino acids and 2-oxoglutarate into corresponding aromatic oxo acids and L-glutamate. The chain is Aromatic amino acid aminotransferase from Corynebacterium efficiens (strain DSM 44549 / YS-314 / AJ 12310 / JCM 11189 / NBRC 100395).